The primary structure comprises 1204 residues: Cingulin (1204 aa).

Residues 7-357 (MAEPRGPVDH…GVISSGSSKA (351 aa)) are head. The interval 25-48 (EPVSGAEMGTLRRGGRRPAKDARA) is disordered. The ZIM signature appears at 48-62 (ASTYGVAVRVQGIAG). An interaction with TJP1/ZO1 region spans residues 54 to 67 (AVRVQGIAGQPFVV). Disordered stretches follow at residues 68-174 (LNSG…DTAP) and 186-266 (DGQL…FSRA). A compositionally biased stretch (polar residues) spans 93–119 (ALSSDSELPENPYSQVQGFPAPSQSST). Ser95, Ser96, Ser98, Ser135, Ser137, Ser140, Ser155, Ser165, Ser214, and Ser217 each carry phosphoserine. The span at 207–231 (EQRKRSKSLDSRLPRDTLEERERQS) shows a compositional bias: basic and acidic residues. A compositionally biased stretch (polar residues) spans 232–245 (TNHWNPSTKYNNHV). The segment covering 247-261 (SLKQPAQSPSPSPLS) has biased composition (low complexity). A phosphoserine mark is found at Ser258, Ser276, Ser338, and Ser351. A coiled-coil region spans residues 358 to 1161 (MAGQGELARK…SLEKDSWRKA (804 aa)). The segment at 379 to 398 (VKKRQKLEPSRAGLERQLEE) is disordered. N6-acetyllysine is present on Lys579. Positions 1161–1182 (ASRSAAESALKHEGLSSDEEFD) are disordered. Residues 1162-1204 (SRSAAESALKHEGLSSDEEFDSVYDPSSIASLLTESNLQTSSC) form a tail region. Ser1176, Ser1177, and Ser1183 each carry phosphoserine.

The protein belongs to the cingulin family. As to quaternary structure, homodimer. Interacts with TJP1/ZO1 and SPEF1.

Its subcellular location is the cell junction. The protein localises to the tight junction. Functionally, probably plays a role in the formation and regulation of the tight junction (TJ) paracellular permeability barrier. The sequence is that of Cingulin from Plecturocebus moloch (Dusky titi monkey).